Reading from the N-terminus, the 239-residue chain is Diablo IAP-binding mitochondrial protein (239 aa).

The transit peptide at 1–22 (MAVLKSWLSRSVTLLFRYRQCL) directs the protein to the mitochondrion. An IAP-binding motif is present at residues 56 to 60 (AVPIA). The tract at residues 217–239 (RQKTQEEGEERAESEQEAYLRED) is disordered.

The protein belongs to the Smac/DIABLO protein family. As to quaternary structure, homodimer. Interacts with BEX3. Interacts with BIRC2/c-IAP1 (via BIR3 domain). Interacts with BIRC6/BRUCE. Interacts with BIRC7/livin. Interacts with XIAP/BIRC4 (via BIR3 domain). Interacts with the monomeric and dimeric form of BIRC5/survivin. Interacts with AREL1 (via HECT domain); in the cytoplasm following induction of apoptosis. Post-translationally, ubiquitinated by BIRC7/livin. Ubiquitinated by BIRC6. In terms of processing, the precursor form is proteolytically cleaved by mitochondrial processing peptidase MPP to remove the transit peptide and produce an intermediate form. This is then processed by PARL to produce the mature cleaved form which is released from mitochondria into the cytosol in apoptotic cells.

It is found in the mitochondrion. The protein resides in the cytoplasm. The protein localises to the cytosol. Functionally, promotes apoptosis by activating caspases in the cytochrome c/Apaf-1/caspase-9 pathway. Acts by opposing the inhibitory activity of inhibitor of apoptosis proteins (IAP). Inhibits the activity of BIRC6/BRUCE by inhibiting its binding to caspases. The sequence is that of Diablo IAP-binding mitochondrial protein from Pongo abelii (Sumatran orangutan).